The primary structure comprises 296 residues: Remorin 4.1 (296 aa).

3 disordered regions span residues 1–78, 121–142, and 242–266; these read MLTL…SGEN, TRIG…DSNP, and EKTQ…EGKR. Over residues 21 to 39 the composition is skewed to basic and acidic residues; that stretch reads ASDRRDETPSSEIVVRDIH. 2 stretches are compositionally biased toward polar residues: residues 41–53 and 62–78; these read MTTT…PQQR and PSRS…SGEN. Basic and acidic residues-rich tracts occupy residues 121-135 and 253-266; these read TRIG…HGQV and RKAE…EGKR. Positions 226–261 form a coiled coil; that stretch reads MKKIERKLEDRRAKAMEKTQNKVAKAQRKAEERRAT.

It belongs to the remorin family. As to quaternary structure, forms homodimer and heterodimer with REM4.2. Interacts with KIN11. In terms of processing, phosphorylated by KIN11. Probably ubiquitinated and degraded by the 26S proteasome pathway. Predominantly detected in bud, stem, root, flower, silique, and leaves, and enhanced dramatically in senescence leaf.

The protein localises to the cell membrane. Functionally, collaborates with REM4.2 to positively regulate the BCTV and BSCTV susceptibility. The protein is Remorin 4.1 of Arabidopsis thaliana (Mouse-ear cress).